The sequence spans 248 residues: 4-hydroxy-tetrahydrodipicolinate reductase (248 aa).

NAD(+)-binding positions include 8–13, Asp34, 76–78, and 103–106; these read GAKGRV, GTT, and APNF. His133 functions as the Proton donor/acceptor in the catalytic mechanism. His134 contributes to the (S)-2,3,4,5-tetrahydrodipicolinate binding site. Catalysis depends on Lys137, which acts as the Proton donor. 143–144 is a (S)-2,3,4,5-tetrahydrodipicolinate binding site; it reads GT.

This sequence belongs to the DapB family.

The protein localises to the cytoplasm. It catalyses the reaction (S)-2,3,4,5-tetrahydrodipicolinate + NAD(+) + H2O = (2S,4S)-4-hydroxy-2,3,4,5-tetrahydrodipicolinate + NADH + H(+). The catalysed reaction is (S)-2,3,4,5-tetrahydrodipicolinate + NADP(+) + H2O = (2S,4S)-4-hydroxy-2,3,4,5-tetrahydrodipicolinate + NADPH + H(+). Its pathway is amino-acid biosynthesis; L-lysine biosynthesis via DAP pathway; (S)-tetrahydrodipicolinate from L-aspartate: step 4/4. In terms of biological role, catalyzes the conversion of 4-hydroxy-tetrahydrodipicolinate (HTPA) to tetrahydrodipicolinate. The chain is 4-hydroxy-tetrahydrodipicolinate reductase from Corynebacterium urealyticum (strain ATCC 43042 / DSM 7109).